The following is a 123-amino-acid chain: Large ribosomal subunit protein uL18 (123 aa).

The protein belongs to the universal ribosomal protein uL18 family. Part of the 50S ribosomal subunit; part of the 5S rRNA/L5/L18/L25 subcomplex. Contacts the 5S and 23S rRNAs.

In terms of biological role, this is one of the proteins that bind and probably mediate the attachment of the 5S RNA into the large ribosomal subunit, where it forms part of the central protuberance. In Chlamydia felis (strain Fe/C-56) (Chlamydophila felis), this protein is Large ribosomal subunit protein uL18.